We begin with the raw amino-acid sequence, 145 residues long: uncharacterized protein (145 aa).

The first 20 residues, 1 to 20 (MPSKVCTLILLFSVINQMKC), serve as a signal peptide directing secretion.

This is an uncharacterized protein from Caenorhabditis elegans.